A 620-amino-acid polypeptide reads, in one-letter code: MYND-type zinc finger protein MUB1 (620 aa).

An MYND-type; degenerate zinc finger spans residues 514 to 555 (NFSCGKWEDFPRQFAKCRRCKRTKYCSRKCQLKAWGYHRYWC). Zn(2+) contacts are provided by Cys-530, Cys-533, His-551, and Cys-555. A compositionally biased stretch (polar residues) spans 563–606 (MRSTNTTTGVNTPNEPSSLNATATTAADVSNSTSTFTPNISTTV). The disordered stretch occupies residues 563–620 (MRSTNTTTGVNTPNEPSSLNATATTAADVSNSTSTFTPNISTTVPDEISNRDENSIPE). A compositionally biased stretch (basic and acidic residues) spans 610–620 (ISNRDENSIPE).

It belongs to the MUB1/samB family. As to quaternary structure, interacts with UBR2 and RPN4.

The protein resides in the cytoplasm. In terms of biological role, involved in the determination of the onset of polarized growth. Required for the ubiquitin-dependent degradation of RPN4. Cooperates with UBR2 to transfer ubiquitin from RAD6 to RPN4. The chain is MYND-type zinc finger protein MUB1 (MUB1) from Saccharomyces cerevisiae (strain ATCC 204508 / S288c) (Baker's yeast).